We begin with the raw amino-acid sequence, 181 residues long: Oligoribonuclease (181 aa).

Residues 8–171 enclose the Exonuclease domain; it reads LIWIDLEMTG…DDIRESVAEL (164 aa). The active site involves Tyr-129.

It belongs to the oligoribonuclease family.

The protein resides in the cytoplasm. In terms of biological role, 3'-to-5' exoribonuclease specific for small oligoribonucleotides. The polypeptide is Oligoribonuclease (Klebsiella pneumoniae subsp. pneumoniae (strain ATCC 700721 / MGH 78578)).